We begin with the raw amino-acid sequence, 332 residues long: Biotin synthase (332 aa).

In terms of domain architecture, Radical SAM core spans 47–273 (YYGNKVKLNM…MNPTKEIRIA (227 aa)). [4Fe-4S] cluster contacts are provided by Cys-65, Cys-69, and Cys-72. Cys-109, Cys-141, Cys-201, and Arg-271 together coordinate [2Fe-2S] cluster.

Belongs to the radical SAM superfamily. Biotin synthase family. In terms of assembly, homodimer. It depends on [4Fe-4S] cluster as a cofactor. [2Fe-2S] cluster is required as a cofactor.

It catalyses the reaction (4R,5S)-dethiobiotin + (sulfur carrier)-SH + 2 reduced [2Fe-2S]-[ferredoxin] + 2 S-adenosyl-L-methionine = (sulfur carrier)-H + biotin + 2 5'-deoxyadenosine + 2 L-methionine + 2 oxidized [2Fe-2S]-[ferredoxin]. The protein operates within cofactor biosynthesis; biotin biosynthesis; biotin from 7,8-diaminononanoate: step 2/2. Functionally, catalyzes the conversion of dethiobiotin (DTB) to biotin by the insertion of a sulfur atom into dethiobiotin via a radical-based mechanism. The chain is Biotin synthase from Geobacillus thermodenitrificans (strain NG80-2).